The chain runs to 222 residues: Protein SHI RELATED SEQUENCE 4 (222 aa).

The Zn(2+) site is built by C72, C75, C83, C88, C92, and C99. The segment at residues 72 to 99 (CQECGNQAKKGCTHGRCRTCCKSNGLHC) is a DNA-binding region (zn(2)-C6 fungal-type; degenerate). The segment at 114 to 137 (RERQQQLQTPTSNPTGGSGRVGKY) is disordered. A compositionally biased stretch (polar residues) spans 118–128 (QQLQTPTSNPT). The Required for homo- and heterodimerization motif lies at 191–194 (IAGH).

The protein belongs to the SHI protein family. In terms of tissue distribution, expressed in cotyledon tips, leaf primordia, hydathodes, stipules, and lateral root primordia and weakly at the edges of petals and sepals.

Its subcellular location is the nucleus. Transcription activator that binds DNA on 5'-ACTCTAC-3' and promotes auxin homeostasis-regulating gene expression (e.g. YUC genes), as well as genes affecting stamen development, cell expansion and timing of flowering. Synergistically with other SHI-related proteins, regulates gynoecium, stamen and leaf development in a dose-dependent manner, controlling apical-basal patterning. Promotes style and stigma formation, and influences vascular development during gynoecium development. May also have a role in the formation and/or maintenance of the shoot apical meristem (SAM). The protein is Protein SHI RELATED SEQUENCE 4 (SRS4) of Arabidopsis thaliana (Mouse-ear cress).